Reading from the N-terminus, the 78-residue chain is Sec-independent protein translocase protein TatA (78 aa).

The chain crosses the membrane as a helical span at residues 1–21 (MFGRIGLPEILLILAIALIIF). The interval 50 to 78 (EVNEVEEEVKENKSSDVKENEDNKTEKST) is disordered. Residues 59–78 (KENKSSDVKENEDNKTEKST) are compositionally biased toward basic and acidic residues.

The protein belongs to the TatA/E family. As to quaternary structure, forms a complex with TatC.

Its subcellular location is the cell membrane. Part of the twin-arginine translocation (Tat) system that transports large folded proteins containing a characteristic twin-arginine motif in their signal peptide across membranes. TatA could form the protein-conducting channel of the Tat system. The protein is Sec-independent protein translocase protein TatA of Natranaerobius thermophilus (strain ATCC BAA-1301 / DSM 18059 / JW/NM-WN-LF).